Consider the following 232-residue polypeptide: Noggin (232 aa).

Positions 1 to 27 (MERCPSLGVTLYALVVVLGLRATPAGG) are cleaved as a signal peptide. An N-linked (GlcNAc...) asparagine glycan is attached at Asn62. The disordered stretch occupies residues 77–96 (GFMATSPPEDRPGGGGGAAG). 4 disulfide bridges follow: Cys155/Cys192, Cys178/Cys228, Cys184/Cys230, and Cys207/Cys215.

Belongs to the noggin family. As to quaternary structure, homodimer. Interacts with GDF5; inhibits chondrocyte differentiation.

It localises to the secreted. Inhibitor of bone morphogenetic proteins (BMP) signaling which is required for growth and patterning of the neural tube and somite. Essential for cartilage morphogenesis and joint formation. Inhibits chondrocyte differentiation through its interaction with GDF5 and, probably, GDF6. The polypeptide is Noggin (NOG) (Homo sapiens (Human)).